A 218-amino-acid chain; its full sequence is Carboxylesterase 2 (218 aa).

Catalysis depends on charge relay system residues S114, D168, and H199.

This sequence belongs to the AB hydrolase superfamily. AB hydrolase 2 family. In terms of assembly, homodimer.

The enzyme catalyses a carboxylic ester + H2O = an alcohol + a carboxylate + H(+). Hydrolyzes carboxylic ester bonds with relatively broad substrate specificity. The polypeptide is Carboxylesterase 2 (estB) (Pseudomonas fluorescens).